The sequence spans 458 residues: tRNA modification GTPase MnmE (458 aa).

Arg26, Glu88, and Arg127 together coordinate (6S)-5-formyl-5,6,7,8-tetrahydrofolate. Positions 224-378 (GLSTAIIGRP…IEDRINQLFF (155 aa)) constitute a TrmE-type G domain. Asn234 contributes to the K(+) binding site. GTP contacts are provided by residues 234-239 (NVGKSS), 253-259 (TDIAGTT), and 278-281 (DTAG). Position 238 (Ser238) interacts with Mg(2+). Residues Thr253, Ile255, and Thr258 each contribute to the K(+) site. Thr259 provides a ligand contact to Mg(2+). Residue Lys458 coordinates (6S)-5-formyl-5,6,7,8-tetrahydrofolate.

It belongs to the TRAFAC class TrmE-Era-EngA-EngB-Septin-like GTPase superfamily. TrmE GTPase family. As to quaternary structure, homodimer. Heterotetramer of two MnmE and two MnmG subunits. The cofactor is K(+).

It is found in the cytoplasm. Its function is as follows. Exhibits a very high intrinsic GTPase hydrolysis rate. Involved in the addition of a carboxymethylaminomethyl (cmnm) group at the wobble position (U34) of certain tRNAs, forming tRNA-cmnm(5)s(2)U34. The chain is tRNA modification GTPase MnmE from Streptococcus pyogenes serotype M28 (strain MGAS6180).